The following is a 278-amino-acid chain: Tryptophan synthase alpha chain (278 aa).

Active-site proton acceptor residues include glutamate 50 and aspartate 61.

It belongs to the TrpA family. As to quaternary structure, tetramer of two alpha and two beta chains.

It carries out the reaction (1S,2R)-1-C-(indol-3-yl)glycerol 3-phosphate + L-serine = D-glyceraldehyde 3-phosphate + L-tryptophan + H2O. It participates in amino-acid biosynthesis; L-tryptophan biosynthesis; L-tryptophan from chorismate: step 5/5. The alpha subunit is responsible for the aldol cleavage of indoleglycerol phosphate to indole and glyceraldehyde 3-phosphate. This chain is Tryptophan synthase alpha chain, found in Methylorubrum populi (strain ATCC BAA-705 / NCIMB 13946 / BJ001) (Methylobacterium populi).